A 64-amino-acid polypeptide reads, in one-letter code: Temporin-ALh (64 aa).

The first 22 residues, 1-22, serve as a signal peptide directing secretion; that stretch reads MFPLKKSLLLLFFLATINLSLC. The propeptide occupies 23–46; that stretch reads EQERNAEEERRDEPDERNAEVEKR. At Ser62 the chain carries Serine amide.

Belongs to the frog skin active peptide (FSAP) family. Temporin subfamily. In terms of tissue distribution, expressed by the skin glands.

It is found in the secreted. Its function is as follows. Antimicrobial peptide with activity against Gram-positive and Gram-negative bacteria and against fungi. Has been tested against S.aureus (MIC=2.5 ug/mL), B.pumilus (MIC=7.5 ug/mL), B.cereus (MIC=75.0 ug/mL), E.coli (MIC=5.0 ug/mL), B.dysenteriae (MIC=20.0 ug/mL), A.cacoaceticus (MIC=60.0 ug/mL), P.aeruginosa (MIC=2.5 ug/mL) and C.albicans (MIC=2.5 ug/mL). Also shows a weak hemolytic activity. This is Temporin-ALh from Amolops loloensis (Lolokou Sucker Frog).